Reading from the N-terminus, the 99-residue chain is UPF0213 protein RBAM_000440 (99 aa).

Residues 4-79 (NSHFFYVLLC…KQLTRKKKEQ (76 aa)) enclose the GIY-YIG domain.

This sequence belongs to the UPF0213 family.

This chain is UPF0213 protein RBAM_000440, found in Bacillus velezensis (strain DSM 23117 / BGSC 10A6 / LMG 26770 / FZB42) (Bacillus amyloliquefaciens subsp. plantarum).